Consider the following 832-residue polypeptide: MSEAGGAGPGGCGAGAGAGAGPGALPPQPAALPPAPPQGSPCAAAAGGSGACGPATAVAAAGTAEGPGGGGSARIAVKKAQLRSAPRAKKLEKLGVYSACKAEESCKCNGWKNPNPSPTPPRADLQQIIVSLTESCRSCSHALAAHVSHLENVSEEEMNRLLGIVLDVEYLFTCVHKEEDADTKQVYFYLFKLLRKSILQRGKPVVEGSLEKKPPFEKPSIEQGVNNFVQYKFSHLPAKERQTIVELAKMFLNRINYWHLEAPSQRRLRSPNDDISGYKENYTRWLCYCNVPQFCDSLPRYETTQVFGRTLLRSVFTVMRRQLLEQARQEKDKLPLEKRTLILTHFPKFLSMLEEEVYSQNSPIWDQDFLSASSRTSQLGIQTVINPPPVAGTISYNSTSSSLEQPNAGSSSPACKASSGLEANPGEKRKMTDSHVLEEAKKPRVMGDIPMELINEVMSTITDPAAMLGPETNFLSAHSARDEAARLEERRGVIEFHVVGNSLNQKPNKKILMWLVGLQNVFSHQLPRMPKEYITRLVFDPKHKTLALIKDGRVIGGICFRMFPSQGFTEIVFCAVTSNEQVKGYGTHLMNHLKEYHIKHDILNFLTYADEYAIGYFKKQGFSKEIKIPKTKYVGYIKDYEGATLMGCELNPRIPYTEFSVIIKKQKEIIKKLIERKQAQIRKVYPGLSCFKDGVRQIPIESIPGIRETGWKPSGKEKSKEPRDPDQLYSTLKSILQQVKSHQSAWPFMEPVKRTEAPGYYEVIRFPMDLKTMSERLKNRYYVSKKLFMADLQRVFTNCKEYNPPESEYYKCANILEKFFFSKIKEAGLIDK.

Positions 1–22 (MSEAGGAGPGGCGAGAGAGAGP) are enriched in gly residues. Disordered regions lie at residues 1-54 (MSEA…ACGP) and 395-436 (SYNS…DSHV). The span at 24–39 (ALPPQPAALPPAPPQG) shows a compositional bias: pro residues. Residues 40-54 (SPCAAAAGGSGACGP) show a composition bias toward low complexity. The segment covering 395-413 (SYNSTSSSLEQPNAGSSSP) has biased composition (polar residues). Residues 425–436 (PGEKRKMTDSHV) are compositionally biased toward basic and acidic residues. The N-acetyltransferase domain occupies 503-651 (LNQKPNKKIL…GATLMGCELN (149 aa)). The active-site Proton donor/acceptor is the Glu-570. Residues 574-576 (CAV), 581-587 (QVKGYGT), and 612-615 (YAIG) each bind acetyl-CoA. The interval 706-725 (IRETGWKPSGKEKSKEPRDP) is disordered. Residues 714-725 (SGKEKSKEPRDP) show a composition bias toward basic and acidic residues. The region spanning 723 to 827 (RDPDQLYSTL…KFFFSKIKEA (105 aa)) is the Bromo domain.

The protein belongs to the acetyltransferase family. GCN5 subfamily. In terms of assembly, interacts with SIRT1. Interacts (unsumoylated form) with NR2C1; the interaction promotes transactivation activity. Interacts with EP300, CREBBP and DDX17. Interacts with NCOA1 and NCOA3. Component of a large chromatin remodeling complex, at least composed of MYSM1, KAT2B/PCAF, RBM10 and KIF11/TRIP5. Interacts with NR2C2 (hypophosphorylated and unsumoylated form); the interaction promotes the transactivation activity of NR2C2. Interacts with KLF1; the interaction does not acetylate KLF1 and there is no enhancement of its transactivational activity. Interacts with NFE4. Interacts with MECOM. Interacts with E2F1; the interaction acetylates E2F1 augmenting its DNA-binding and transcriptional activity. Interacts with NPAS2, BMAL1 and CLOCK. Interacts with BCAS3. Interacts with CEBPB. Interacts with NR4A3. Interacts with NFATC2. Interacts with TBX5. Interacts with PLK4. Interacts with RB1; this interaction leads to RB1 acetylation. Interacts with VRK1. (Microbial infection) Interacts with and acetylates HIV-1 Tat. As to quaternary structure, (Microbial infection) Interacts with HTLV-1 Tax. Ubiquitously expressed but most abundant in heart and skeletal muscle. Also expressed in the skin, in keratinocytes (at protein level).

The protein localises to the nucleus. Its subcellular location is the cytoplasm. The protein resides in the cytoskeleton. It is found in the microtubule organizing center. It localises to the centrosome. It carries out the reaction L-lysyl-[histone] + acetyl-CoA = N(6)-acetyl-L-lysyl-[histone] + CoA + H(+). The catalysed reaction is L-lysyl-[protein] + acetyl-CoA = N(6)-acetyl-L-lysyl-[protein] + CoA + H(+). It catalyses the reaction spermidine + acetyl-CoA = N(8)-acetylspermidine + CoA + H(+). Its activity is regulated as follows. Activated in vitro by very low concentrations of spermidine, but inhibited at spermidine concentrations higher than 4 uM. The activating effect of low spermidine concentrations may be mediated by N(8)-acetylspermidine produced by KAT2B/P/CAF itself acting as a positive feedback loop. Functions as a histone acetyltransferase (HAT) to promote transcriptional activation. Has significant histone acetyltransferase activity with core histones (H3 and H4), and also with nucleosome core particles. Has a a strong preference for acetylation of H3 at 'Lys-9' (H3K9ac). Also acetylates non-histone proteins, such as ACLY, MAPRE1/EB1, PLK4, RRP9/U3-55K and TBX5. Inhibits cell-cycle progression and counteracts the mitogenic activity of the adenoviral oncoprotein E1A. Acts as a circadian transcriptional coactivator which enhances the activity of the circadian transcriptional activators: NPAS2-BMAL1 and CLOCK-BMAL1 heterodimers. Involved in heart and limb development by mediating acetylation of TBX5, acetylation regulating nucleocytoplasmic shuttling of TBX5. Acts as a negative regulator of centrosome amplification by mediating acetylation of PLK4. Acetylates RRP9/U3-55K, a core subunit of the U3 snoRNP complex, impairing pre-rRNA processing. Acetylates MAPRE1/EB1, promoting dynamic kinetochore-microtubule interactions in early mitosis. Also acetylates spermidine. Its function is as follows. (Microbial infection) In case of HIV-1 infection, it is recruited by the viral protein Tat. Regulates Tat's transactivating activity and may help inducing chromatin remodeling of proviral genes. The polypeptide is Histone acetyltransferase KAT2B (Homo sapiens (Human)).